We begin with the raw amino-acid sequence, 364 residues long: Fructose-bisphosphate aldolase B (364 aa).

Ala-2 is modified (N-acetylalanine). Lys-13 is modified (N6-succinyllysine). Ser-36 is modified (phosphoserine). Residue Thr-39 is modified to Phosphothreonine. Arg-43 contacts beta-D-fructose 1,6-bisphosphate. Position 89 is a phosphoserine (Ser-89). A Phosphothreonine modification is found at Thr-119. Lys-121 bears the N6-succinyllysine mark. Ser-132 carries the post-translational modification Phosphoserine. Glu-188 functions as the Proton acceptor in the catalytic mechanism. The active-site Schiff-base intermediate with dihydroxyacetone-P is the Lys-230. 4 positions are modified to phosphoserine: Ser-272, Ser-276, Ser-299, and Ser-301. 272–274 (SGG) provides a ligand contact to beta-D-fructose 1,6-bisphosphate. Residue Arg-304 coordinates beta-D-fructose 1,6-bisphosphate. Position 309 is a phosphoserine (Ser-309). Lys-317 carries the post-translational modification N6-succinyllysine.

The protein belongs to the class I fructose-bisphosphate aldolase family. Homotetramer. Interacts with BBS1, BBS2, BBS4 and BBS7. Forms a ternary complex with G6PD and TP53; this interaction is direct.

Its subcellular location is the cytoplasm. The protein localises to the cytosol. It is found in the cytoskeleton. The protein resides in the microtubule organizing center. It localises to the centrosome. Its subcellular location is the centriolar satellite. The catalysed reaction is beta-D-fructose 1,6-bisphosphate = D-glyceraldehyde 3-phosphate + dihydroxyacetone phosphate. It carries out the reaction beta-D-fructose 1-phosphate = D-glyceraldehyde + dihydroxyacetone phosphate. It functions in the pathway carbohydrate degradation; glycolysis; D-glyceraldehyde 3-phosphate and glycerone phosphate from D-glucose: step 4/4. The protein operates within carbohydrate biosynthesis; gluconeogenesis. Its pathway is carbohydrate metabolism; fructose metabolism. Catalyzes the aldol cleavage of fructose 1,6-biphosphate to form two triosephosphates dihydroxyacetone phosphate and D-glyceraldehyde 3-phosphate in glycolysis as well as the reverse stereospecific aldol addition reaction in gluconeogenesis. In fructolysis, metabolizes fructose 1-phosphate derived from the phosphorylation of dietary fructose by fructokinase into dihydroxyacetone phosphate and D-glyceraldehyde. Acts as an adapter independently of its enzymatic activity, exerts a tumor suppressor role by stabilizing the ternary complex with G6PD and TP53 to inhibit G6PD activity and keep oxidative pentose phosphate metabolism in check. The chain is Fructose-bisphosphate aldolase B (ALDOB) from Pongo abelii (Sumatran orangutan).